A 387-amino-acid polypeptide reads, in one-letter code: 3-ketoacyl-CoA thiolase (387 aa).

The active-site Acyl-thioester intermediate is Cys-91. Residues His-343 and Cys-373 each act as proton acceptor in the active site.

Belongs to the thiolase-like superfamily. Thiolase family. Heterotetramer of two alpha chains (FadB) and two beta chains (FadA).

The protein localises to the cytoplasm. The catalysed reaction is an acyl-CoA + acetyl-CoA = a 3-oxoacyl-CoA + CoA. It functions in the pathway lipid metabolism; fatty acid beta-oxidation. Catalyzes the final step of fatty acid oxidation in which acetyl-CoA is released and the CoA ester of a fatty acid two carbons shorter is formed. The sequence is that of 3-ketoacyl-CoA thiolase from Yersinia enterocolitica serotype O:8 / biotype 1B (strain NCTC 13174 / 8081).